The primary structure comprises 124 residues: Small ribosomal subunit protein uS12 (124 aa).

Asp89 carries the post-translational modification 3-methylthioaspartic acid.

Belongs to the universal ribosomal protein uS12 family. As to quaternary structure, part of the 30S ribosomal subunit. Contacts proteins S8 and S17. May interact with IF1 in the 30S initiation complex.

With S4 and S5 plays an important role in translational accuracy. Its function is as follows. Interacts with and stabilizes bases of the 16S rRNA that are involved in tRNA selection in the A site and with the mRNA backbone. Located at the interface of the 30S and 50S subunits, it traverses the body of the 30S subunit contacting proteins on the other side and probably holding the rRNA structure together. The combined cluster of proteins S8, S12 and S17 appears to hold together the shoulder and platform of the 30S subunit. This is Small ribosomal subunit protein uS12 from Vibrio vulnificus (strain CMCP6).